The chain runs to 292 residues: Elongation factor Ts (292 aa).

The interval Thr80–Val83 is involved in Mg(2+) ion dislocation from EF-Tu.

It belongs to the EF-Ts family.

The protein resides in the cytoplasm. In terms of biological role, associates with the EF-Tu.GDP complex and induces the exchange of GDP to GTP. It remains bound to the aminoacyl-tRNA.EF-Tu.GTP complex up to the GTP hydrolysis stage on the ribosome. The polypeptide is Elongation factor Ts (Psychrobacter sp. (strain PRwf-1)).